The sequence spans 240 residues: Large ribosomal subunit protein uL2 (240 aa).

Residues 200-240 (HPFGGGGRQHPGKPKSISRNAPPGRKVGDIASKRTGRGGNE) form a disordered region.

Belongs to the universal ribosomal protein uL2 family. In terms of assembly, part of the 50S ribosomal subunit. Forms a bridge to the 30S subunit in the 70S ribosome. Interacts weakly with protein L37Ae.

Its function is as follows. One of the primary rRNA binding proteins. Required for association of the 30S and 50S subunits to form the 70S ribosome, for tRNA binding and peptide bond formation. It has been suggested to have peptidyltransferase activity; this is somewhat controversial. Makes several contacts with the 16S rRNA in the 70S ribosome. The polypeptide is Large ribosomal subunit protein uL2 (rpl2) (Haloarcula marismortui (strain ATCC 43049 / DSM 3752 / JCM 8966 / VKM B-1809) (Halobacterium marismortui)).